The sequence spans 179 residues: Crossover junction endodeoxyribonuclease RuvC (179 aa).

Active-site residues include Asp-12, Glu-72, and Asp-144. Residues Asp-12, Glu-72, and Asp-144 each coordinate Mg(2+).

Belongs to the RuvC family. As to quaternary structure, homodimer which binds Holliday junction (HJ) DNA. The HJ becomes 2-fold symmetrical on binding to RuvC with unstacked arms; it has a different conformation from HJ DNA in complex with RuvA. In the full resolvosome a probable DNA-RuvA(4)-RuvB(12)-RuvC(2) complex forms which resolves the HJ. Requires Mg(2+) as cofactor.

It is found in the cytoplasm. It carries out the reaction Endonucleolytic cleavage at a junction such as a reciprocal single-stranded crossover between two homologous DNA duplexes (Holliday junction).. Its function is as follows. The RuvA-RuvB-RuvC complex processes Holliday junction (HJ) DNA during genetic recombination and DNA repair. Endonuclease that resolves HJ intermediates. Cleaves cruciform DNA by making single-stranded nicks across the HJ at symmetrical positions within the homologous arms, yielding a 5'-phosphate and a 3'-hydroxyl group; requires a central core of homology in the junction. The consensus cleavage sequence is 5'-(A/T)TT(C/G)-3'. Cleavage occurs on the 3'-side of the TT dinucleotide at the point of strand exchange. HJ branch migration catalyzed by RuvA-RuvB allows RuvC to scan DNA until it finds its consensus sequence, where it cleaves and resolves the cruciform DNA. This chain is Crossover junction endodeoxyribonuclease RuvC, found in Dechloromonas aromatica (strain RCB).